The primary structure comprises 351 residues: Cyclic AMP-dependent transcription factor ATF-4 (351 aa).

Lys53 participates in a covalent cross-link: Glycyl lysine isopeptide (Lys-Gly) (interchain with G-Cter in SUMO2). The disordered stretch occupies residues 210–268 (EEDTPSDNDSGICMSPESYLGSPQHSPSTRGSPNRSLPSPGVLCGSARPKPYDPPGEKM). At Thr213 the chain carries Phosphothreonine. At Ser215 the chain carries Phosphoserine; by CK2. The BetaTrCP degron motif signature appears at 215-224 (SDNDSGICMS). Phosphoserine is present on residues Ser219, Ser224, Ser231, and Ser235. A compositionally biased stretch (polar residues) spans 230 to 246 (GSPQHSPSTRGSPNRSL). 4-hydroxyproline is present on Pro236. Ser245 is modified (phosphoserine; by RPS6KA3). Ser248 is subject to Phosphoserine. Glycyl lysine isopeptide (Lys-Gly) (interchain with G-Cter in SUMO2) cross-links involve residues Lys259, Lys267, and Lys272. The region spanning 278–341 (LDKKLKKMEQ…QYLKDLIEEV (64 aa)) is the bZIP domain. Residues 280 to 300 (KKLKKMEQNKTAATRYRQKKR) are basic motif. Residues 280 to 340 (KKLKKMEQNK…IQYLKDLIEE (61 aa)) adopt a coiled-coil conformation. Positions 305-341 (ALTGECKELEKKNEALKERADSLAKEIQYLKDLIEEV) are interaction with GABBR1. Residues 306–334 (LTGECKELEKKNEALKERADSLAKEIQYL) form a leucine-zipper region. Position 311 is an N6-acetyllysine (Lys311).

It belongs to the bZIP family. As to quaternary structure, binds DNA as a homodimer and as a heterodimer. Heterodimer; heterodimerizes with CEBPB. Heterodimer; heterodimerizes with DDIT3/CHOP. Interacts with CEP290 (via an N-terminal region). Interacts with NEK6, DAPK2 (isoform 2) and ZIPK/DAPK3. Interacts (via its leucine zipper domain) with GABBR1 and GABBR2 (via their C-termini). Forms a heterodimer with TXLNG in osteoblasts. Interacts (via its DNA binding domain) with FOXO1 (C-terminal half); the interaction occurs in osteoblasts and regulates glucose homeostasis through suppression of beta-cell proliferation and a decrease in insulin production. Interacts with SATB2; the interaction results in enhanced DNA binding and transactivation by these transcription factors. Interacts with ABRAXAS2. Interacts with TRIB3, inhibiting the transactivation activity of ATF4. Interacts with DISC1; which inhibits ATF4 transcription factor activity by disrupting ATF4 dimerization and DNA-binding. Interacts with EP300/p300; EP300/p300 stabilizes ATF4 and increases its transcriptional activity independently of its catalytic activity by preventing its ubiquitination. Ubiquitinated by SCF(BTRC) in response to mTORC1 signal, followed by proteasomal degradation and leading to down-regulate expression of SIRT4. Interaction with EP300/p300 inhibits ubiquitination by SCF(BTRC). In terms of processing, phosphorylation at Ser-245 by RPS6KA3/RSK2 in osteoblasts enhances transactivation activity and promotes osteoblast differentiation. Phosphorylated on the betaTrCP degron motif at Ser-219, followed by phosphorylation at Thr-213, Ser-224, Ser-231, Ser-235 and Ser-248, promoting interaction with BTRC and ubiquitination. Phosphorylation is promoted by mTORC1. Phosphorylation at Ser-215 by CK2 decreases its stability. Phosphorylated by NEK6. Post-translationally, hydroxylated by PHD3, leading to decreased protein stability.

The protein localises to the nucleus. The protein resides in the nucleus speckle. It is found in the cytoplasm. Its subcellular location is the cell membrane. It localises to the cytoskeleton. The protein localises to the microtubule organizing center. The protein resides in the centrosome. Transcription factor that binds the cAMP response element (CRE) (consensus: 5'-GTGACGT[AC][AG]-3') and displays two biological functions, as regulator of metabolic and redox processes under normal cellular conditions, and as master transcription factor during integrated stress response (ISR). Binds to asymmetric CRE's as a heterodimer and to palindromic CRE's as a homodimer. Core effector of the ISR, which is required for adaptation to various stress such as endoplasmic reticulum (ER) stress, amino acid starvation, mitochondrial stress or oxidative stress. During ISR, ATF4 translation is induced via an alternative ribosome translation re-initiation mechanism in response to EIF2S1/eIF-2-alpha phosphorylation, and stress-induced ATF4 acts as a master transcription factor of stress-responsive genes in order to promote cell recovery. Promotes the transcription of genes linked to amino acid sufficiency and resistance to oxidative stress to protect cells against metabolic consequences of ER oxidation. Activates the transcription of NLRP1, possibly in concert with other factors in response to ER stress. Activates the transcription of asparagine synthetase (ASNS) in response to amino acid deprivation or ER stress. However, when associated with DDIT3/CHOP, the transcriptional activation of the ASNS gene is inhibited in response to amino acid deprivation. Together with DDIT3/CHOP, mediates programmed cell death by promoting the expression of genes involved in cellular amino acid metabolic processes, mRNA translation and the terminal unfolded protein response (terminal UPR), a cellular response that elicits programmed cell death when ER stress is prolonged and unresolved. Activates the expression of COX7A2L/SCAF1 downstream of the EIF2AK3/PERK-mediated unfolded protein response, thereby promoting formation of respiratory chain supercomplexes and increasing mitochondrial oxidative phosphorylation. Together with DDIT3/CHOP, activates the transcription of the IRS-regulator TRIB3 and promotes ER stress-induced neuronal cell death by regulating the expression of BBC3/PUMA in response to ER stress. May cooperate with the UPR transcriptional regulator QRICH1 to regulate ER protein homeostasis which is critical for cell viability in response to ER stress. In the absence of stress, ATF4 translation is at low levels and it is required for normal metabolic processes such as embryonic lens formation, fetal liver hematopoiesis, bone development and synaptic plasticity. Acts as a regulator of osteoblast differentiation in response to phosphorylation by RPS6KA3/RSK2: phosphorylation in osteoblasts enhances transactivation activity and promotes expression of osteoblast-specific genes and post-transcriptionally regulates the synthesis of Type I collagen, the main constituent of the bone matrix. Cooperates with FOXO1 in osteoblasts to regulate glucose homeostasis through suppression of beta-cell production and decrease in insulin production. Activates transcription of SIRT4. Regulates the circadian expression of the core clock component PER2 and the serotonin transporter SLC6A4. Binds in a circadian time-dependent manner to the cAMP response elements (CRE) in the SLC6A4 and PER2 promoters and periodically activates the transcription of these genes. Mainly acts as a transcriptional activator in cellular stress adaptation, but it can also act as a transcriptional repressor: acts as a regulator of synaptic plasticity by repressing transcription, thereby inhibiting induction and maintenance of long-term memory. Regulates synaptic functions via interaction with DISC1 in neurons, which inhibits ATF4 transcription factor activity by disrupting ATF4 dimerization and DNA-binding. Functionally, (Microbial infection) Binds to a Tax-responsive enhancer element in the long terminal repeat of HTLV-I. The sequence is that of Cyclic AMP-dependent transcription factor ATF-4 from Homo sapiens (Human).